Here is a 257-residue protein sequence, read N- to C-terminus: Small ribosomal subunit protein uS2 (257 aa).

The disordered stretch occupies residues 229–257; sequence QFTPATTSSQEVDKASEQVEIAADDIDEE.

This sequence belongs to the universal ribosomal protein uS2 family.

The sequence is that of Small ribosomal subunit protein uS2 from Caldicellulosiruptor bescii (strain ATCC BAA-1888 / DSM 6725 / KCTC 15123 / Z-1320) (Anaerocellum thermophilum).